The chain runs to 41 residues: Large ribosomal subunit protein bL36B (41 aa).

Belongs to the bacterial ribosomal protein bL36 family.

This chain is Large ribosomal subunit protein bL36B, found in Neisseria meningitidis serogroup B (strain ATCC BAA-335 / MC58).